The sequence spans 160 residues: Cytochrome b6-f complex subunit 4 (160 aa).

The next 3 membrane-spanning stretches (helical) occupy residues leucine 36 to valine 56, leucine 95 to glutamate 115, and threonine 131 to isoleucine 151.

This sequence belongs to the cytochrome b family. PetD subfamily. In terms of assembly, the 4 large subunits of the cytochrome b6-f complex are cytochrome b6, subunit IV (17 kDa polypeptide, petD), cytochrome f and the Rieske protein, while the 4 small subunits are petG, petL, petM and petN. The complex functions as a dimer.

It is found in the plastid. Its subcellular location is the chloroplast thylakoid membrane. Component of the cytochrome b6-f complex, which mediates electron transfer between photosystem II (PSII) and photosystem I (PSI), cyclic electron flow around PSI, and state transitions. This chain is Cytochrome b6-f complex subunit 4, found in Chaetosphaeridium globosum (Charophycean green alga).